We begin with the raw amino-acid sequence, 265 residues long: Adenosylcobinamide-GDP ribazoletransferase (265 aa).

The next 5 helical transmembrane spans lie at 59-79, 113-133, 141-161, 183-203, and 206-226; these read LSWILPIEISIILGMILSVLI, IGTFGSIGLILSLGLKYLLLV, WIFLFTSWFSHSASRWFALLL, LPPFDFALSTFFGCFPAVYFL, and FQNQIPNVLLGFFLSSIFVFY.

Belongs to the CobS family. Mg(2+) is required as a cofactor.

It is found in the cell inner membrane. The catalysed reaction is alpha-ribazole + adenosylcob(III)inamide-GDP = adenosylcob(III)alamin + GMP + H(+). It catalyses the reaction alpha-ribazole 5'-phosphate + adenosylcob(III)inamide-GDP = adenosylcob(III)alamin 5'-phosphate + GMP + H(+). It participates in cofactor biosynthesis; adenosylcobalamin biosynthesis; adenosylcobalamin from cob(II)yrinate a,c-diamide: step 7/7. Joins adenosylcobinamide-GDP and alpha-ribazole to generate adenosylcobalamin (Ado-cobalamin). Also synthesizes adenosylcobalamin 5'-phosphate from adenosylcobinamide-GDP and alpha-ribazole 5'-phosphate. In Leptospira interrogans serogroup Icterohaemorrhagiae serovar copenhageni (strain Fiocruz L1-130), this protein is Adenosylcobinamide-GDP ribazoletransferase.